The following is a 113-amino-acid chain: Large ribosomal subunit protein uL24 (113 aa).

It belongs to the universal ribosomal protein uL24 family. Part of the 50S ribosomal subunit.

In terms of biological role, one of two assembly initiator proteins, it binds directly to the 5'-end of the 23S rRNA, where it nucleates assembly of the 50S subunit. Functionally, one of the proteins that surrounds the polypeptide exit tunnel on the outside of the subunit. The polypeptide is Large ribosomal subunit protein uL24 (rplX) (Fusobacterium nucleatum subsp. nucleatum (strain ATCC 25586 / DSM 15643 / BCRC 10681 / CIP 101130 / JCM 8532 / KCTC 2640 / LMG 13131 / VPI 4355)).